Consider the following 130-residue polypeptide: S-adenosylmethionine decarboxylase proenzyme (130 aa).

The active-site Schiff-base intermediate with substrate; via pyruvic acid is the Ser64. Position 64 is a pyruvic acid (Ser); by autocatalysis (Ser64). The Proton acceptor; for processing activity role is filled by His69. Cys84 acts as the Proton donor; for catalytic activity in catalysis.

The protein belongs to the prokaryotic AdoMetDC family. Type 1 subfamily. In terms of assembly, heterotetramer of two alpha and two beta chains arranged as a dimer of alpha/beta heterodimers. Pyruvate serves as cofactor. Post-translationally, is synthesized initially as an inactive proenzyme. Formation of the active enzyme involves a self-maturation process in which the active site pyruvoyl group is generated from an internal serine residue via an autocatalytic post-translational modification. Two non-identical subunits are generated from the proenzyme in this reaction, and the pyruvate is formed at the N-terminus of the alpha chain, which is derived from the carboxyl end of the proenzyme. The post-translation cleavage follows an unusual pathway, termed non-hydrolytic serinolysis, in which the side chain hydroxyl group of the serine supplies its oxygen atom to form the C-terminus of the beta chain, while the remainder of the serine residue undergoes an oxidative deamination to produce ammonia and the pyruvoyl group blocking the N-terminus of the alpha chain.

It catalyses the reaction S-adenosyl-L-methionine + H(+) = S-adenosyl 3-(methylsulfanyl)propylamine + CO2. The protein operates within amine and polyamine biosynthesis; S-adenosylmethioninamine biosynthesis; S-adenosylmethioninamine from S-adenosyl-L-methionine: step 1/1. Catalyzes the decarboxylation of S-adenosylmethionine to S-adenosylmethioninamine (dcAdoMet), the propylamine donor required for the synthesis of the polyamines spermine and spermidine from the diamine putrescine. The chain is S-adenosylmethionine decarboxylase proenzyme from Thermoplasma volcanium (strain ATCC 51530 / DSM 4299 / JCM 9571 / NBRC 15438 / GSS1).